The chain runs to 465 residues: GTPase Der (465 aa).

EngA-type G domains are found at residues 3 to 166 (FLVA…LNEF) and 184 to 358 (IHFS…ACAN). GTP is bound by residues 9 to 16 (GRANVGKS), 56 to 60 (DTGGI), 118 to 121 (NKVD), 190 to 197 (GRPNVGKS), 237 to 241 (DTAGV), and 302 to 305 (NKWD). A KH-like domain is found at 359–443 (KKITTADATR…PIVFEFKQSE (85 aa)).

Belongs to the TRAFAC class TrmE-Era-EngA-EngB-Septin-like GTPase superfamily. EngA (Der) GTPase family. Associates with the 50S ribosomal subunit.

In terms of biological role, GTPase that plays an essential role in the late steps of ribosome biogenesis. The protein is GTPase Der of Francisella philomiragia subsp. philomiragia (strain ATCC 25017 / CCUG 19701 / FSC 153 / O#319-036).